The sequence spans 696 residues: DNA-directed RNA polymerase subunit beta' (696 aa).

Residues cysteine 69, cysteine 71, cysteine 87, and cysteine 90 each coordinate Zn(2+). Positions 504, 506, and 508 each coordinate Mg(2+).

It belongs to the RNA polymerase beta' chain family. RpoC1 subfamily. In terms of assembly, in plastids the minimal PEP RNA polymerase catalytic core is composed of four subunits: alpha, beta, beta', and beta''. When a (nuclear-encoded) sigma factor is associated with the core the holoenzyme is formed, which can initiate transcription. Mg(2+) is required as a cofactor. Requires Zn(2+) as cofactor.

Its subcellular location is the plastid. The protein localises to the chloroplast. It catalyses the reaction RNA(n) + a ribonucleoside 5'-triphosphate = RNA(n+1) + diphosphate. DNA-dependent RNA polymerase catalyzes the transcription of DNA into RNA using the four ribonucleoside triphosphates as substrates. The polypeptide is DNA-directed RNA polymerase subunit beta' (Pinus thunbergii (Japanese black pine)).